Reading from the N-terminus, the 417-residue chain is MLEQMGIAAKQASYKLAQLSSREKNRVLEKIADELEAQSESILNANAQDVADARANGLSEAMLDRLALTPARLKGIADDVRQVCNLADPVGQVIDGGVLDSGLRLERRRVPLGVIGVIYEARPNVTVDVASLCLKTGNAVILRGGKETCRTNAATVAVIQDALKSCGLPAGAVQAIDNPDRALVSEMLRMDKYIDMLIPRGGAGLHKLCREQSTIPVITGGIGVCHIYVDESAEIAEVLKVIVNAKTQRPSTCNTVETLLVNKNIADSFLPALSKQMAESGVTLHADAAALAQLQTGPAKVVAVKAEEYDDEFLSLDLNVKIVSDLDDAIAHIREHGTQHSDAILTRDMRNAQRFVNEVDSSAVYVNASTRFTDGGQFGLGAEVAVSTQKLHARGPMGLEALTTYKWIGIGDYTIRA.

The protein belongs to the gamma-glutamyl phosphate reductase family.

The protein resides in the cytoplasm. The enzyme catalyses L-glutamate 5-semialdehyde + phosphate + NADP(+) = L-glutamyl 5-phosphate + NADPH + H(+). The protein operates within amino-acid biosynthesis; L-proline biosynthesis; L-glutamate 5-semialdehyde from L-glutamate: step 2/2. Its function is as follows. Catalyzes the NADPH-dependent reduction of L-glutamate 5-phosphate into L-glutamate 5-semialdehyde and phosphate. The product spontaneously undergoes cyclization to form 1-pyrroline-5-carboxylate. The chain is Gamma-glutamyl phosphate reductase from Escherichia coli O6:H1 (strain CFT073 / ATCC 700928 / UPEC).